The primary structure comprises 461 residues: Cysteine--tRNA ligase (461 aa).

Cys28 provides a ligand contact to Zn(2+). The 'HIGH' region motif lies at 30–40; the sequence is ITVYDLCHIGH. Residues Cys209, His234, and Glu238 each coordinate Zn(2+). A 'KMSKS' region motif is present at residues 266–270; that stretch reads KMSKS. Position 269 (Lys269) interacts with ATP.

Belongs to the class-I aminoacyl-tRNA synthetase family. As to quaternary structure, monomer. Zn(2+) serves as cofactor.

The protein localises to the cytoplasm. It catalyses the reaction tRNA(Cys) + L-cysteine + ATP = L-cysteinyl-tRNA(Cys) + AMP + diphosphate. The chain is Cysteine--tRNA ligase from Escherichia coli (strain SMS-3-5 / SECEC).